The sequence spans 374 residues: Putative F-box protein At5g60060 (374 aa).

One can recognise an F-box domain in the interval 9-61; it reads SQWSDLPLDILELISDRLDHDSSDTIHLLCLRSVCATWRLSLPLSNKNNRLSK.

The chain is Putative F-box protein At5g60060 from Arabidopsis thaliana (Mouse-ear cress).